The primary structure comprises 217 residues: Large ribosomal subunit protein uL1 (217 aa).

Belongs to the universal ribosomal protein uL1 family. Component of the large ribosomal subunit (LSU). Mature N.crassa ribosomes consist of a small (40S) and a large (60S) subunit. The 40S small subunit contains 1 molecule of ribosomal RNA (18S rRNA) and at least 32 different proteins. The large 60S subunit contains 3 rRNA molecules (26S, 5.8S and 5S rRNA) and at least 42 different proteins. uL1 forms part of the L1 stalk.

It is found in the cytoplasm. In terms of biological role, component of the ribosome, a large ribonucleoprotein complex responsible for the synthesis of proteins in the cell. The small ribosomal subunit (SSU) binds messenger RNAs (mRNAs) and translates the encoded message by selecting cognate aminoacyl-transfer RNA (tRNA) molecules. The large subunit (LSU) contains the ribosomal catalytic site termed the peptidyl transferase center (PTC), which catalyzes the formation of peptide bonds, thereby polymerizing the amino acids delivered by tRNAs into a polypeptide chain. The nascent polypeptides leave the ribosome through a tunnel in the LSU and interact with protein factors that function in enzymatic processing, targeting, and the membrane insertion of nascent chains at the exit of the ribosomal tunnel. uL1 forms part of the L1 stalk, a mobile element that plays a role in evacuating the exit-site tRNA. In Neurospora crassa (strain ATCC 24698 / 74-OR23-1A / CBS 708.71 / DSM 1257 / FGSC 987), this protein is Large ribosomal subunit protein uL1 (crp-74).